Consider the following 183-residue polypeptide: Proton-transporting V-type ATPase complex assembly regulator TMEM9 (183 aa).

An N-terminal signal peptide occupies residues 1–20; that stretch reads MKLLCLVAVVGCLLVPPAQA. 3 N-linked (GlcNAc...) asparagine glycosylation sites follow: N21, N38, and N47. At 21 to 89 the chain is on the extracellular side; that stretch reads NKSSEDIRCK…YEERSTTTIK (69 aa). A helical transmembrane segment spans residues 90–110; the sequence is VIIVIYLSVVGALLLYMAFLM. Residues 111–183 lie on the Cytoplasmic side of the membrane; sequence LVDPLIRKPD…TVFDRHKMLS (73 aa). Position 144 is a phosphoserine (S144).

It belongs to the TMEM9 family. Interacts with the v-ATPase accessory protein ATP6AP2 and with the v-ATPase complex subunit ATP6V0D1; these interactions lead to the assembly of the v-ATPase complex. Post-translationally, N-glycosylated. As to expression, expressed in heart, lung, kidney, liver and intestines. Enriched in the hepatocytes around the central vein.

The protein localises to the lysosome membrane. Its subcellular location is the late endosome membrane. It is found in the endosome. It localises to the multivesicular body membrane. Its function is as follows. Transmembrane protein that binds to and facilitates the assembly of lysosomal proton-transporting V-type ATPase (v-ATPase), resulting in enhanced lysosomal acidification and trafficking. By bringing the v-ATPase accessory protein ATP6AP2 and the v-ATPase subunit ATP6V0D1 together, allows v-ATPase complex formation and activation. TMEM9-controlled vesicular acidification induces hyperactivation of Wnt/beta-catenin signaling, involved in development, tissue homeostasis and tissue regeneration, through lysosomal degradation of adenomatous polyposis coli/APC. In the liver, involved in hepatic regeneration. The polypeptide is Proton-transporting V-type ATPase complex assembly regulator TMEM9 (Mus musculus (Mouse)).